The following is a 33-amino-acid chain: Cytochrome b6-f complex subunit 8 (33 aa).

A helical membrane pass occupies residues 2–22 (LFTVAWASLAAMFSFSIAMVV).

This sequence belongs to the PetN family. In terms of assembly, the 4 large subunits of the cytochrome b6-f complex are cytochrome b6, subunit IV (17 kDa polypeptide, PetD), cytochrome f and the Rieske protein, while the 4 small subunits are PetG, PetL, PetM and PetN. The complex functions as a dimer.

Its subcellular location is the cellular thylakoid membrane. Component of the cytochrome b6-f complex, which mediates electron transfer between photosystem II (PSII) and photosystem I (PSI), cyclic electron flow around PSI, and state transitions. This chain is Cytochrome b6-f complex subunit 8, found in Parasynechococcus marenigrum (strain WH8102).